Reading from the N-terminus, the 468-residue chain is Phenylalanine--tRNA ligase alpha subunit (468 aa).

L-phenylalanine contacts are provided by residues Thr311, 350-352 (QLD), and Phe390. Glu392 serves as a coordination point for Mg(2+).

This sequence belongs to the class-II aminoacyl-tRNA synthetase family. Phe-tRNA synthetase alpha subunit type 2 subfamily. Tetramer of two alpha and two beta subunits. The cofactor is Mg(2+).

Its subcellular location is the cytoplasm. It carries out the reaction tRNA(Phe) + L-phenylalanine + ATP = L-phenylalanyl-tRNA(Phe) + AMP + diphosphate + H(+). In Saccharolobus solfataricus (strain ATCC 35092 / DSM 1617 / JCM 11322 / P2) (Sulfolobus solfataricus), this protein is Phenylalanine--tRNA ligase alpha subunit.